We begin with the raw amino-acid sequence, 314 residues long: 2,3-dihydroxyphenylpropionate/2,3-dihydroxicinnamic acid 1,2-dioxygenase (314 aa).

Catalysis depends on His-115, which acts as the Proton donor. The active-site Proton acceptor is His-179.

Belongs to the LigB/MhpB extradiol dioxygenase family. In terms of assembly, homotetramer. Fe(2+) serves as cofactor.

The catalysed reaction is 3-(2,3-dihydroxyphenyl)propanoate + O2 = (2Z,4E)-2-hydroxy-6-oxonona-2,4-dienedioate + H(+). It carries out the reaction (2E)-3-(2,3-dihydroxyphenyl)prop-2-enoate + O2 = (2Z,4E,7E)-2-hydroxy-6-oxonona-2,4,7-trienedioate + H(+). It functions in the pathway aromatic compound metabolism; 3-phenylpropanoate degradation. Catalyzes the non-heme iron(II)-dependent oxidative cleavage of 2,3-dihydroxyphenylpropionic acid and 2,3-dihydroxicinnamic acid into 2-hydroxy-6-ketononadienedioate and 2-hydroxy-6-ketononatrienedioate, respectively. In Klebsiella pneumoniae (strain 342), this protein is 2,3-dihydroxyphenylpropionate/2,3-dihydroxicinnamic acid 1,2-dioxygenase.